The following is a 272-amino-acid chain: TLC domain-containing protein 4 C (272 aa).

The next 7 helical transmembrane spans lie at 16-36 (FSNS…FIIY), 71-91 (VSMI…VESF), 103-123 (SLLM…IICY), 128-148 (LVGT…IYVA), 155-175 (CFVP…PLNM), 196-216 (FVIT…IYLV), and 233-253 (VFIT…FLLI). Residues 61–261 (KKKLEWDQRV…LIKKLYQTYL (201 aa)) enclose the TLC domain.

This sequence belongs to the TLCD4 family.

The protein resides in the membrane. The sequence is that of TLC domain-containing protein 4 C (tlcd4c) from Dictyostelium discoideum (Social amoeba).